We begin with the raw amino-acid sequence, 217 residues long: Peroxiredoxin (217 aa).

One can recognise a Thioredoxin domain in the interval 2–159 (AVIGEKFPDV…VVRLVKALQT (158 aa)). C46 serves as the catalytic Cysteine sulfenic acid (-SOH) intermediate. R122 serves as a coordination point for substrate.

The protein belongs to the peroxiredoxin family. Prx6 subfamily. Homodecamer. Pentamer of dimers that assemble into a ring structure.

It is found in the cytoplasm. The catalysed reaction is a hydroperoxide + [thioredoxin]-dithiol = an alcohol + [thioredoxin]-disulfide + H2O. Its function is as follows. Thiol-specific peroxidase that catalyzes the reduction of hydrogen peroxide and organic hydroperoxides to water and alcohols, respectively. Plays a role in cell protection against oxidative stress by detoxifying peroxides. The polypeptide is Peroxiredoxin (Methanococcus vannielii (strain ATCC 35089 / DSM 1224 / JCM 13029 / OCM 148 / SB)).